A 505-amino-acid chain; its full sequence is Probable bifunctional methylthioribulose-1-phosphate dehydratase/enolase-phosphatase E1 (505 aa).

The segment at 1–237 (MGLDKDGISN…ALKLHQLGLD (237 aa)) is methylthioribulose-1-phosphate dehydratase. Cys109 lines the substrate pocket. 2 residues coordinate Zn(2+): His127 and His129. Glu152 functions as the Proton donor/acceptor; for methylthioribulose-1-phosphate dehydratase activity in the catalytic mechanism. His202 is a binding site for Zn(2+). The segment at 266–505 (FVLDIEGTTT…FRTAKSLLEL (240 aa)) is enolase-phosphatase E1. 2 residues coordinate Mg(2+): Asp269 and Glu271. Residues 404–405 (SS) and Lys438 each bind substrate. Asp464 serves as a coordination point for Mg(2+).

It in the N-terminal section; belongs to the aldolase class II family. MtnB subfamily. In the C-terminal section; belongs to the HAD-like hydrolase superfamily. MasA/MtnC family. It depends on Zn(2+) as a cofactor. Requires Mg(2+) as cofactor.

It catalyses the reaction 5-(methylsulfanyl)-D-ribulose 1-phosphate = 5-methylsulfanyl-2,3-dioxopentyl phosphate + H2O. It carries out the reaction 5-methylsulfanyl-2,3-dioxopentyl phosphate + H2O = 1,2-dihydroxy-5-(methylsulfanyl)pent-1-en-3-one + phosphate. It participates in amino-acid biosynthesis; L-methionine biosynthesis via salvage pathway; L-methionine from S-methyl-5-thio-alpha-D-ribose 1-phosphate: step 2/6. It functions in the pathway amino-acid biosynthesis; L-methionine biosynthesis via salvage pathway; L-methionine from S-methyl-5-thio-alpha-D-ribose 1-phosphate: step 3/6. The protein operates within amino-acid biosynthesis; L-methionine biosynthesis via salvage pathway; L-methionine from S-methyl-5-thio-alpha-D-ribose 1-phosphate: step 4/6. The polypeptide is Probable bifunctional methylthioribulose-1-phosphate dehydratase/enolase-phosphatase E1 (Physcomitrium patens (Spreading-leaved earth moss)).